Reading from the N-terminus, the 260-residue chain is Acetylglutamate kinase (260 aa).

Substrate contacts are provided by residues 46–47 (GG), arginine 68, and asparagine 160.

The protein belongs to the acetylglutamate kinase family. ArgB subfamily.

It localises to the cytoplasm. The catalysed reaction is N-acetyl-L-glutamate + ATP = N-acetyl-L-glutamyl 5-phosphate + ADP. It participates in amino-acid biosynthesis; L-arginine biosynthesis; N(2)-acetyl-L-ornithine from L-glutamate: step 2/4. Catalyzes the ATP-dependent phosphorylation of N-acetyl-L-glutamate. The protein is Acetylglutamate kinase of Shewanella sp. (strain W3-18-1).